The sequence spans 197 residues: C4-dicarboxylate transport transcriptional regulatory protein DctR (197 aa).

In terms of domain architecture, Response regulatory spans 4-120 (TVHIVDDEES…HIVDIALSAI (117 aa)). Position 53 is a 4-aspartylphosphate (Asp-53). The tract at residues 128–135 (AEAQAREA) is inter-domain linker. Residues 136–197 (VAARRASLSA…RNIADLARMT (62 aa)) form the HTH luxR-type domain. Positions 160 to 179 (NKQIAERLGIAMRTVEVHRS) form a DNA-binding region, H-T-H motif.

Post-translationally, phosphorylated by DctS.

It localises to the cytoplasm. Functionally, member of the two-component regulatory system DctS/DctR involved in the transport of C4-dicarboxylates. DctR functions as a transcriptional repressor of genes for C4-dicarboxylate transport. The chain is C4-dicarboxylate transport transcriptional regulatory protein DctR (dctR) from Rhodobacter capsulatus (Rhodopseudomonas capsulata).